The chain runs to 496 residues: Membrane-bound lytic murein transglycosylase F (496 aa).

A signal peptide spans 1–31; it reads MPIFSTRVLTYLRCIFRLFIGLMLLLTLVGC. Residues 32–271 are non-LT domain; sequence DFYTPSSQLE…KLDEKYFGHV (240 aa). Positions 273–496 are LT domain; sequence NFDFVDTRTF…AEVVKQITLR (224 aa). The active site involves Glu-316. The disordered stretch occupies residues 464-485; that stretch reads HRREELDEDDSSEPQSTERPTV.

In the N-terminal section; belongs to the bacterial solute-binding protein 3 family. The protein in the C-terminal section; belongs to the transglycosylase Slt family.

The protein localises to the cell outer membrane. It carries out the reaction Exolytic cleavage of the (1-&gt;4)-beta-glycosidic linkage between N-acetylmuramic acid (MurNAc) and N-acetylglucosamine (GlcNAc) residues in peptidoglycan, from either the reducing or the non-reducing ends of the peptidoglycan chains, with concomitant formation of a 1,6-anhydrobond in the MurNAc residue.. In terms of biological role, murein-degrading enzyme that degrades murein glycan strands and insoluble, high-molecular weight murein sacculi, with the concomitant formation of a 1,6-anhydromuramoyl product. Lytic transglycosylases (LTs) play an integral role in the metabolism of the peptidoglycan (PG) sacculus. Their lytic action creates space within the PG sacculus to allow for its expansion as well as for the insertion of various structures such as secretion systems and flagella. In Aeromonas salmonicida (strain A449), this protein is Membrane-bound lytic murein transglycosylase F.